The sequence spans 685 residues: Methionine--tRNA ligase (685 aa).

Zn(2+)-binding residues include cysteine 142, cysteine 145, cysteine 155, and cysteine 158. The short motif at 330–334 (KMSKS) is the 'KMSKS' region element. Lysine 333 lines the ATP pocket. One can recognise a tRNA-binding domain in the interval 584-685 (DFIKVDLRVA…SGAKPGDKVS (102 aa)).

Belongs to the class-I aminoacyl-tRNA synthetase family. MetG type 1 subfamily. In terms of assembly, homodimer. The cofactor is Zn(2+).

It localises to the cytoplasm. It catalyses the reaction tRNA(Met) + L-methionine + ATP = L-methionyl-tRNA(Met) + AMP + diphosphate. Its function is as follows. Is required not only for elongation of protein synthesis but also for the initiation of all mRNA translation through initiator tRNA(fMet) aminoacylation. This Acinetobacter baylyi (strain ATCC 33305 / BD413 / ADP1) protein is Methionine--tRNA ligase.